Here is a 1380-residue protein sequence, read N- to C-terminus: Receptor-type adenylate cyclase A (1380 aa).

At methionine 1–valine 34 the chain is on the cytoplasmic side. The chain crosses the membrane as a helical span at residues phenylalanine 35–isoleucine 55. Topologically, residues threonine 56–asparagine 891 are extracellular. 4 N-linked (GlcNAc...) asparagine glycosylation sites follow: asparagine 422, asparagine 478, asparagine 497, and asparagine 567. Residues glycine 892–leucine 912 form a helical membrane-spanning segment. Residues tyrosine 913–glutamate 1380 are Cytoplasmic-facing. The Guanylate cyclase domain maps to threonine 933 to glutamate 1087. Mg(2+) is bound by residues aspartate 938 and aspartate 981. The tract at residues leucine 1270–serine 1298 is disordered.

Belongs to the adenylyl cyclase class-3 family. It depends on Mg(2+) as a cofactor.

Its subcellular location is the membrane. The enzyme catalyses ATP = 3',5'-cyclic AMP + diphosphate. Its function is as follows. Could act as a receptor for an unknown ligand. In Leishmania donovani, this protein is Receptor-type adenylate cyclase A (RAC-A).